Consider the following 544-residue polypeptide: Chaperonin GroEL (544 aa).

Residues 29-32 (TLGP), Lys50, 86-90 (DGTTT), Gly414, and Asp495 contribute to the ATP site.

It belongs to the chaperonin (HSP60) family. Forms a cylinder of 14 subunits composed of two heptameric rings stacked back-to-back. Interacts with the co-chaperonin GroES.

The protein resides in the cytoplasm. The catalysed reaction is ATP + H2O + a folded polypeptide = ADP + phosphate + an unfolded polypeptide.. In terms of biological role, together with its co-chaperonin GroES, plays an essential role in assisting protein folding. The GroEL-GroES system forms a nano-cage that allows encapsulation of the non-native substrate proteins and provides a physical environment optimized to promote and accelerate protein folding. The protein is Chaperonin GroEL of Treponema pallidum subsp. pallidum (strain SS14).